A 283-amino-acid chain; its full sequence is tRNA-cytidine(32) 2-sulfurtransferase (283 aa).

Residues 37–42 (SGGKDS) carry the PP-loop motif motif. [4Fe-4S] cluster is bound by residues Cys112, Cys115, and Cys203.

Belongs to the TtcA family. Homodimer. Requires Mg(2+) as cofactor. The cofactor is [4Fe-4S] cluster.

The protein resides in the cytoplasm. The enzyme catalyses cytidine(32) in tRNA + S-sulfanyl-L-cysteinyl-[cysteine desulfurase] + AH2 + ATP = 2-thiocytidine(32) in tRNA + L-cysteinyl-[cysteine desulfurase] + A + AMP + diphosphate + H(+). It participates in tRNA modification. Functionally, catalyzes the ATP-dependent 2-thiolation of cytidine in position 32 of tRNA, to form 2-thiocytidine (s(2)C32). The sulfur atoms are provided by the cysteine/cysteine desulfurase (IscS) system. The sequence is that of tRNA-cytidine(32) 2-sulfurtransferase from Legionella pneumophila (strain Paris).